We begin with the raw amino-acid sequence, 406 residues long: Endoglucanase 1 (406 aa).

Positions Met-1 to Ser-43 are cleaved as a signal peptide. Composition is skewed to polar residues over residues Gln-30–Glu-41 and Glu-51–Asp-62. The disordered stretch occupies residues Gln-30–Asp-62. Glu-210 functions as the Proton donor in the catalytic mechanism. Glu-330 (nucleophile) is an active-site residue.

It belongs to the glycosyl hydrolase 5 (cellulase A) family.

It catalyses the reaction Endohydrolysis of (1-&gt;4)-beta-D-glucosidic linkages in cellulose, lichenin and cereal beta-D-glucans.. The polypeptide is Endoglucanase 1 (Eg I) (Ruminococcus albus).